The sequence spans 516 residues: Histidine ammonia-lyase (516 aa).

A cross-link (5-imidazolinone (Ala-Gly)) is located at residues 143–145 (ASG). Serine 144 is modified (2,3-didehydroalanine (Ser)).

This sequence belongs to the PAL/histidase family. In terms of processing, contains an active site 4-methylidene-imidazol-5-one (MIO), which is formed autocatalytically by cyclization and dehydration of residues Ala-Ser-Gly.

The protein resides in the cytoplasm. It carries out the reaction L-histidine = trans-urocanate + NH4(+). It functions in the pathway amino-acid degradation; L-histidine degradation into L-glutamate; N-formimidoyl-L-glutamate from L-histidine: step 1/3. This chain is Histidine ammonia-lyase, found in Koribacter versatilis (strain Ellin345).